A 151-amino-acid polypeptide reads, in one-letter code: Chaperonin GroEL (151 aa).

An ATP-binding site is contributed by Asp41 to Thr45.

Belongs to the chaperonin (HSP60) family. As to quaternary structure, forms a cylinder of 14 subunits composed of two heptameric rings stacked back-to-back. Interacts with the co-chaperonin GroES.

The protein localises to the cytoplasm. It catalyses the reaction ATP + H2O + a folded polypeptide = ADP + phosphate + an unfolded polypeptide.. Its function is as follows. Together with its co-chaperonin GroES, plays an essential role in assisting protein folding. The GroEL-GroES system forms a nano-cage that allows encapsulation of the non-native substrate proteins and provides a physical environment optimized to promote and accelerate protein folding. The chain is Chaperonin GroEL from Mycolicibacterium fortuitum (Mycobacterium fortuitum).